Here is a 449-residue protein sequence, read N- to C-terminus: 23S rRNA (uracil(1939)-C(5))-methyltransferase RlmD (449 aa).

The region spanning 1–66 (MGRSRYHNKL…AKFDEAKVVE (66 aa)) is the TRAM domain. [4Fe-4S] cluster-binding residues include C79, C85, C88, and C169. Residues Q280, F309, N314, E330, N357, and D379 each coordinate S-adenosyl-L-methionine. Catalysis depends on C405, which acts as the Nucleophile.

The protein belongs to the class I-like SAM-binding methyltransferase superfamily. RNA M5U methyltransferase family. RlmD subfamily.

The enzyme catalyses uridine(1939) in 23S rRNA + S-adenosyl-L-methionine = 5-methyluridine(1939) in 23S rRNA + S-adenosyl-L-homocysteine + H(+). Its function is as follows. Catalyzes the formation of 5-methyl-uridine at position 1939 (m5U1939) in 23S rRNA. This is 23S rRNA (uracil(1939)-C(5))-methyltransferase RlmD from Francisella tularensis subsp. holarctica (strain LVS).